The sequence spans 110 residues: Small ribosomal subunit protein uS17 (110 aa).

Belongs to the universal ribosomal protein uS17 family. In terms of assembly, part of the 30S ribosomal subunit.

In terms of biological role, one of the primary rRNA binding proteins, it binds specifically to the 5'-end of 16S ribosomal RNA. The polypeptide is Small ribosomal subunit protein uS17 (Petrotoga mobilis (strain DSM 10674 / SJ95)).